The following is a 216-amino-acid chain: Glycerol-3-phosphate acyltransferase (216 aa).

Transmembrane regions (helical) follow at residues 3 to 23, 48 to 68, 82 to 102, 112 to 132, 142 to 162, and 166 to 186; these read FPIF…YWIA, IGWK…MLPV, FQLL…FLGF, FGVF…VFWV, LGSI…TILL, and EVSY…ILTH.

It belongs to the PlsY family. Probably interacts with PlsX.

It localises to the cell inner membrane. It carries out the reaction an acyl phosphate + sn-glycerol 3-phosphate = a 1-acyl-sn-glycero-3-phosphate + phosphate. It functions in the pathway lipid metabolism; phospholipid metabolism. Catalyzes the transfer of an acyl group from acyl-phosphate (acyl-PO(4)) to glycerol-3-phosphate (G3P) to form lysophosphatidic acid (LPA). This enzyme utilizes acyl-phosphate as fatty acyl donor, but not acyl-CoA or acyl-ACP. The chain is Glycerol-3-phosphate acyltransferase from Leptospira interrogans serogroup Icterohaemorrhagiae serovar Lai (strain 56601).